The sequence spans 265 residues: Serine protease harobin (265 aa).

An N-terminal signal peptide occupies residues 1-18 (MPLIRVLASLLILQLSYG). The propeptide occupies 19-33 (KSLDNGAKAITSLDR). Residues 34-257 (IIGGFECNPS…YKDWIEGIIA (224 aa)) enclose the Peptidase S1 domain. 7 disulfides stabilise this stretch: C40-C172, C59-C75, C106-C152, C107-C264, C151-C218, C183-C197, and C208-C233. H74 acts as the Charge relay system in catalysis. Residue N112 is glycosylated (N-linked (GlcNAc...) asparagine). D119 serves as the catalytic Charge relay system. The N-linked (GlcNAc...) asparagine glycan is linked to N130. Residue S212 is the Charge relay system of the active site.

The protein belongs to the peptidase S1 family. Snake venom subfamily. As to quaternary structure, monomer. Harobin contains three additional Cys residues than other snake venom serine proteases, suggesting an additional disulfide bond. In addition, it is more stable than other snake 6-disulfide-bond serine proteases, since it is less sensitive to DTT. As to expression, expressed by the venom gland.

The protein localises to the secreted. Its activity is regulated as follows. Inhibited by PMSF. In terms of biological role, serine protein with fibrinolytic and fibrinogenolytic activities. Degrades Bbeta-chain (FGB) of fibrinogen first and then the Aalpha-chain (FGA). Gamma-chain (FGG) are also digested on prolonged incubation. In vitro, it cleaves high molecular weight (HMW) kininogen (KNG) releasing bradykinin that promotes vasodilation. In vitro and in vivo, it cleaves angiotensin-2 (AGT). This explains the reduction of blood pressure in hypertensive rats. Also has antithrombotic effects on thrombosis animal models. The polypeptide is Serine protease harobin (Hydrophis hardwickii (Hardwick's spine-bellied seasnake)).